Consider the following 331-residue polypeptide: Tetraacyldisaccharide 4'-kinase (331 aa).

An ATP-binding site is contributed by 51-58 (TAGGAGKT).

This sequence belongs to the LpxK family.

It catalyses the reaction a lipid A disaccharide + ATP = a lipid IVA + ADP + H(+). Its pathway is glycolipid biosynthesis; lipid IV(A) biosynthesis; lipid IV(A) from (3R)-3-hydroxytetradecanoyl-[acyl-carrier-protein] and UDP-N-acetyl-alpha-D-glucosamine: step 6/6. Transfers the gamma-phosphate of ATP to the 4'-position of a tetraacyldisaccharide 1-phosphate intermediate (termed DS-1-P) to form tetraacyldisaccharide 1,4'-bis-phosphate (lipid IVA). This chain is Tetraacyldisaccharide 4'-kinase, found in Rhodospirillum rubrum (strain ATCC 11170 / ATH 1.1.1 / DSM 467 / LMG 4362 / NCIMB 8255 / S1).